The primary structure comprises 310 residues: tRNA-splicing endonuclease subunit Sen34 (310 aa).

The segment at 119–177 (GQAAKKQKLEQASGASSSQEAGSSQAAKEDETSDGQASGEQEEAGPSSSQAGPSNGVAP) is disordered. Over residues 128 to 144 (EQASGASSSQEAGSSQA) the composition is skewed to low complexity. Catalysis depends on residues Tyr-247, His-255, and Lys-286.

Belongs to the tRNA-intron endonuclease family. In terms of assembly, tRNA splicing endonuclease is a heterotetramer composed of TSEN2, TSEN15, TSEN34/LENG5 and TSEN54. tRNA splicing endonuclease complex also contains proteins of the pre-mRNA 3'-end processing machinery such as CLP1, CPSF1, CPSF4 and CSTF2.

The protein resides in the nucleus. It is found in the nucleolus. It catalyses the reaction pretRNA = a 3'-half-tRNA molecule with a 5'-OH end + a 5'-half-tRNA molecule with a 2',3'-cyclic phosphate end + an intron with a 2',3'-cyclic phosphate and a 5'-hydroxyl terminus.. In terms of biological role, constitutes one of the two catalytic subunit of the tRNA-splicing endonuclease complex, a complex responsible for identification and cleavage of the splice sites in pre-tRNA. It cleaves pre-tRNA at the 5'- and 3'-splice sites to release the intron. The products are an intron and two tRNA half-molecules bearing 2',3'-cyclic phosphate and 5'-OH termini. There are no conserved sequences at the splice sites, but the intron is invariably located at the same site in the gene, placing the splice sites an invariant distance from the constant structural features of the tRNA body. It probably carries the active site for 3'-splice site cleavage. The tRNA splicing endonuclease is also involved in mRNA processing via its association with pre-mRNA 3'-end processing factors, establishing a link between pre-tRNA splicing and pre-mRNA 3'-end formation, suggesting that the endonuclease subunits function in multiple RNA-processing events. This is tRNA-splicing endonuclease subunit Sen34 (TSEN34) from Homo sapiens (Human).